Reading from the N-terminus, the 316-residue chain is Melanocyte-stimulating hormone receptor (316 aa).

The Extracellular segment spans residues 1-37 (MAVQGSQRRLLGSLNSTPTAIPQLGLAANQTGARCLE). N-linked (GlcNAc...) asparagine glycosylation is present at Asn-29. Residues 38–63 (VSIPDGLFLSLGLVSLVENVLVVATI) traverse the membrane as a helical segment. Topologically, residues 64–72 (AKNRNLHSP) are cytoplasmic. Residues 73-93 (MYCFICCLALSDLLVSGSNVV) form a helical membrane-spanning segment. The Extracellular segment spans residues 94–117 (DTLLLLLEAGALAARAAVLQQLDN). Residues 118-139 (VIDVITCSSMLSSLCFLGAIAV) form a helical membrane-spanning segment. Residues 140–162 (DRYISIFYALRYRSIVTLPRARR) are Cytoplasmic-facing. The helical transmembrane segment at 163–182 (AVAAIWVASVLFSTLFIAYY) threads the bilayer. Residues 183-190 (DHTAVLLC) lie on the Extracellular side of the membrane. A helical membrane pass occupies residues 191-210 (LVVFFLAMLVLMAVLYVHML). Residues 211–239 (ARACQHAQGIARLHKRQRPVHKGFGLKGP) are Cytoplasmic-facing. Residues 240-265 (VTLTILLGIFFLCWGPFFLHLTLIVL) traverse the membrane as a helical segment. At 266-278 (CPEHPTCGCIFKN) the chain is on the extracellular side. Residues 279–299 (FNLFLALIICNAIIDPLIYAF) form a helical membrane-spanning segment. Residues 300 to 316 (HSQELRRTLKEVLTCSW) lie on the Cytoplasmic side of the membrane. Cys-314 is lipidated: S-palmitoyl cysteine.

It belongs to the G-protein coupled receptor 1 family. Interacts with MGRN1, but does not undergo MGRN1-mediated ubiquitination; this interaction competes with GNAS-binding and thus inhibits agonist-induced cAMP production. Interacts with OPN3; the interaction results in a decrease in MC1R-mediated cAMP signaling and ultimately a decrease in melanin production in melanocytes.

It localises to the cell membrane. Receptor for MSH (alpha, beta and gamma) and ACTH. The activity of this receptor is mediated by G proteins which activate adenylate cyclase. Mediates melanogenesis, the production of eumelanin (black/brown) and phaeomelanin (red/yellow), via regulation of cAMP signaling in melanocytes. This is Melanocyte-stimulating hormone receptor (MC1R) from Gorilla gorilla gorilla (Western lowland gorilla).